Reading from the N-terminus, the 146-residue chain is NADH-quinone oxidoreductase subunit A (146 aa).

Transmembrane regions (helical) follow at residues 14–34 (FAVFFVVAIGLCCLMLMGAFF), 66–86 (FYLVAMFFVIFDVEALYLYAW), and 96–116 (VGFIEAAIFILVLLAGLVYLV).

It belongs to the complex I subunit 3 family. In terms of assembly, NDH-1 is composed of 13 different subunits. Subunits NuoA, H, J, K, L, M, N constitute the membrane sector of the complex.

The protein resides in the cell inner membrane. The enzyme catalyses a quinone + NADH + 5 H(+)(in) = a quinol + NAD(+) + 4 H(+)(out). In terms of biological role, NDH-1 shuttles electrons from NADH, via FMN and iron-sulfur (Fe-S) centers, to quinones in the respiratory chain. The immediate electron acceptor for the enzyme in this species is believed to be ubiquinone. Couples the redox reaction to proton translocation (for every two electrons transferred, four hydrogen ions are translocated across the cytoplasmic membrane), and thus conserves the redox energy in a proton gradient. This is NADH-quinone oxidoreductase subunit A from Serratia proteamaculans (strain 568).